The primary structure comprises 954 residues: Protein translocase subunit SecA (954 aa).

Residues Gln86, 104-108 (GEGKT), and Asp494 each bind ATP. Positions 520 to 549 (LDPDNPLGSASTTSRGGGQGFGPASPKPKK) are disordered.

The protein belongs to the SecA family. In terms of assembly, monomer and homodimer. Part of the essential Sec protein translocation apparatus which comprises SecA, SecYEG and auxiliary proteins SecDF. Other proteins may also be involved.

The protein resides in the cell inner membrane. It localises to the cellular thylakoid membrane. The protein localises to the cytoplasm. The enzyme catalyses ATP + H2O + cellular proteinSide 1 = ADP + phosphate + cellular proteinSide 2.. Its function is as follows. Part of the Sec protein translocase complex. Interacts with the SecYEG preprotein conducting channel. Has a central role in coupling the hydrolysis of ATP to the transfer of proteins into and across the cell membrane, serving as an ATP-driven molecular motor driving the stepwise translocation of polypeptide chains across the membrane. In terms of biological role, probably participates in protein translocation into and across both the cytoplasmic and thylakoid membranes in cyanobacterial cells. This is Protein translocase subunit SecA from Synechococcus sp. (strain JA-3-3Ab) (Cyanobacteria bacterium Yellowstone A-Prime).